Reading from the N-terminus, the 275-residue chain is Dermonecrotic toxin SpeSicTox-betaIIA2ii (275 aa).

His5 is an active-site residue. Glu25 and Asp27 together coordinate Mg(2+). His41 acts as the Nucleophile in catalysis. 2 cysteine pairs are disulfide-bonded: Cys45/Cys51 and Cys47/Cys190. Asp85 contacts Mg(2+).

It belongs to the arthropod phospholipase D family. Class II subfamily. Mg(2+) serves as cofactor. As to expression, expressed by the venom gland.

Its subcellular location is the secreted. The enzyme catalyses an N-(acyl)-sphingosylphosphocholine = an N-(acyl)-sphingosyl-1,3-cyclic phosphate + choline. It catalyses the reaction an N-(acyl)-sphingosylphosphoethanolamine = an N-(acyl)-sphingosyl-1,3-cyclic phosphate + ethanolamine. It carries out the reaction a 1-acyl-sn-glycero-3-phosphocholine = a 1-acyl-sn-glycero-2,3-cyclic phosphate + choline. The catalysed reaction is a 1-acyl-sn-glycero-3-phosphoethanolamine = a 1-acyl-sn-glycero-2,3-cyclic phosphate + ethanolamine. Its function is as follows. Dermonecrotic toxins cleave the phosphodiester linkage between the phosphate and headgroup of certain phospholipids (sphingolipid and lysolipid substrates), forming an alcohol (often choline) and a cyclic phosphate. This toxin acts on sphingomyelin (SM). It may also act on ceramide phosphoethanolamine (CPE), lysophosphatidylcholine (LPC) and lysophosphatidylethanolamine (LPE), but not on lysophosphatidylserine (LPS), and lysophosphatidylglycerol (LPG). It acts by transphosphatidylation, releasing exclusively cyclic phosphate products as second products. Induces dermonecrosis, hemolysis, increased vascular permeability, edema, inflammatory response, and platelet aggregation. The polypeptide is Dermonecrotic toxin SpeSicTox-betaIIA2ii (Sicarius peruensis (Six-eyed sand spider)).